Here is a 341-residue protein sequence, read N- to C-terminus: Methionine import ATP-binding protein MetN 2 (341 aa).

Positions 2–241 constitute an ABC transporter domain; the sequence is IELKEVVKEY…PQHTVTKRFV (240 aa). ATP is bound at residue 38–45; it reads GFSGAGKS.

Belongs to the ABC transporter superfamily. Methionine importer (TC 3.A.1.24) family. As to quaternary structure, the complex is composed of two ATP-binding proteins (MetN), two transmembrane proteins (MetI) and a solute-binding protein (MetQ).

The protein resides in the cell membrane. The enzyme catalyses L-methionine(out) + ATP + H2O = L-methionine(in) + ADP + phosphate + H(+). The catalysed reaction is D-methionine(out) + ATP + H2O = D-methionine(in) + ADP + phosphate + H(+). In terms of biological role, part of the ABC transporter complex MetNIQ involved in methionine import. Responsible for energy coupling to the transport system. The chain is Methionine import ATP-binding protein MetN 2 from Staphylococcus aureus (strain bovine RF122 / ET3-1).